The primary structure comprises 210 residues: Small ribosomal subunit protein uS4 (210 aa).

A disordered region spans residues 30–49 (EKSSLEKRKYPPGLPPKKKG). Residues 99-162 (RRLDNVLYRM…QKSAFIEENI (64 aa)) enclose the S4 RNA-binding domain.

The protein belongs to the universal ribosomal protein uS4 family. Part of the 30S ribosomal subunit. Contacts protein S5. The interaction surface between S4 and S5 is involved in control of translational fidelity.

Functionally, one of the primary rRNA binding proteins, it binds directly to 16S rRNA where it nucleates assembly of the body of the 30S subunit. In terms of biological role, with S5 and S12 plays an important role in translational accuracy. This Leptospira biflexa serovar Patoc (strain Patoc 1 / Ames) protein is Small ribosomal subunit protein uS4.